A 170-amino-acid polypeptide reads, in one-letter code: uncharacterized protein (170 aa).

This is an uncharacterized protein from Treponema pallidum (strain Nichols).